We begin with the raw amino-acid sequence, 252 residues long: Ribosomal RNA small subunit methyltransferase J (252 aa).

S-adenosyl-L-methionine-binding positions include 101–102 (RD), 117–118 (ER), 153–154 (SS), and Asp-171.

The protein belongs to the methyltransferase superfamily. RsmJ family.

Its subcellular location is the cytoplasm. It catalyses the reaction guanosine(1516) in 16S rRNA + S-adenosyl-L-methionine = N(2)-methylguanosine(1516) in 16S rRNA + S-adenosyl-L-homocysteine + H(+). In terms of biological role, specifically methylates the guanosine in position 1516 of 16S rRNA. The polypeptide is Ribosomal RNA small subunit methyltransferase J (Citrobacter koseri (strain ATCC BAA-895 / CDC 4225-83 / SGSC4696)).